The primary structure comprises 481 residues: 3-isopropylmalate dehydratase large subunit (481 aa).

Cys363, Cys423, and Cys426 together coordinate [4Fe-4S] cluster. Residues 432–459 (DQLKPGERSASTSNRNFEGRQGPGGRTH) are disordered.

This sequence belongs to the aconitase/IPM isomerase family. LeuC type 1 subfamily. As to quaternary structure, heterodimer of LeuC and LeuD. Requires [4Fe-4S] cluster as cofactor.

It catalyses the reaction (2R,3S)-3-isopropylmalate = (2S)-2-isopropylmalate. It participates in amino-acid biosynthesis; L-leucine biosynthesis; L-leucine from 3-methyl-2-oxobutanoate: step 2/4. Functionally, catalyzes the isomerization between 2-isopropylmalate and 3-isopropylmalate, via the formation of 2-isopropylmaleate. This chain is 3-isopropylmalate dehydratase large subunit, found in Corynebacterium glutamicum (strain ATCC 13032 / DSM 20300 / JCM 1318 / BCRC 11384 / CCUG 27702 / LMG 3730 / NBRC 12168 / NCIMB 10025 / NRRL B-2784 / 534).